Here is a 451-residue protein sequence, read N- to C-terminus: Bifunctional protein GlmU (451 aa).

The pyrophosphorylase stretch occupies residues methionine 1–lysine 232. UDP-N-acetyl-alpha-D-glucosamine-binding positions include leucine 11 to glycine 14, lysine 25, glutamine 78, and glycine 83 to threonine 84. Aspartate 108 is a Mg(2+) binding site. The UDP-N-acetyl-alpha-D-glucosamine site is built by glycine 144, glutamate 158, asparagine 173, and asparagine 230. Asparagine 230 lines the Mg(2+) pocket. The interval alanine 233–alanine 253 is linker. The segment at glycine 254–lysine 451 is N-acetyltransferase. 2 residues coordinate UDP-N-acetyl-alpha-D-glucosamine: arginine 319 and lysine 337. Residue histidine 349 is the Proton acceptor of the active site. Positions 352 and 363 each coordinate UDP-N-acetyl-alpha-D-glucosamine. Acetyl-CoA contacts are provided by residues alanine 366, asparagine 372–tyrosine 373, serine 409, and arginine 426.

It in the N-terminal section; belongs to the N-acetylglucosamine-1-phosphate uridyltransferase family. This sequence in the C-terminal section; belongs to the transferase hexapeptide repeat family. In terms of assembly, homotrimer. The cofactor is Mg(2+).

The protein resides in the cytoplasm. It catalyses the reaction alpha-D-glucosamine 1-phosphate + acetyl-CoA = N-acetyl-alpha-D-glucosamine 1-phosphate + CoA + H(+). It carries out the reaction N-acetyl-alpha-D-glucosamine 1-phosphate + UTP + H(+) = UDP-N-acetyl-alpha-D-glucosamine + diphosphate. Its pathway is nucleotide-sugar biosynthesis; UDP-N-acetyl-alpha-D-glucosamine biosynthesis; N-acetyl-alpha-D-glucosamine 1-phosphate from alpha-D-glucosamine 6-phosphate (route II): step 2/2. It participates in nucleotide-sugar biosynthesis; UDP-N-acetyl-alpha-D-glucosamine biosynthesis; UDP-N-acetyl-alpha-D-glucosamine from N-acetyl-alpha-D-glucosamine 1-phosphate: step 1/1. The protein operates within bacterial outer membrane biogenesis; LPS lipid A biosynthesis. In terms of biological role, catalyzes the last two sequential reactions in the de novo biosynthetic pathway for UDP-N-acetylglucosamine (UDP-GlcNAc). The C-terminal domain catalyzes the transfer of acetyl group from acetyl coenzyme A to glucosamine-1-phosphate (GlcN-1-P) to produce N-acetylglucosamine-1-phosphate (GlcNAc-1-P), which is converted into UDP-GlcNAc by the transfer of uridine 5-monophosphate (from uridine 5-triphosphate), a reaction catalyzed by the N-terminal domain. The chain is Bifunctional protein GlmU from Bradyrhizobium diazoefficiens (strain JCM 10833 / BCRC 13528 / IAM 13628 / NBRC 14792 / USDA 110).